The following is a 440-amino-acid chain: Adenylosuccinate synthetase (440 aa).

GTP is bound by residues 12-18 (GDEGKGK) and 40-42 (GHT). Residue aspartate 13 is the Proton acceptor of the active site. The Mg(2+) site is built by aspartate 13 and glycine 40. Residues 13–16 (DEGK), 38–41 (NAGH), threonine 128, arginine 142, glutamine 223, threonine 238, and arginine 302 contribute to the IMP site. The active-site Proton donor is histidine 41. A substrate-binding site is contributed by 298–304 (TTTGRPR). GTP contacts are provided by residues arginine 304, 330–332 (KLD), and 412–414 (SVG).

The protein belongs to the adenylosuccinate synthetase family. As to quaternary structure, homodimer. Mg(2+) serves as cofactor.

It is found in the cytoplasm. The enzyme catalyses IMP + L-aspartate + GTP = N(6)-(1,2-dicarboxyethyl)-AMP + GDP + phosphate + 2 H(+). The protein operates within purine metabolism; AMP biosynthesis via de novo pathway; AMP from IMP: step 1/2. Functionally, plays an important role in the de novo pathway of purine nucleotide biosynthesis. Catalyzes the first committed step in the biosynthesis of AMP from IMP. The chain is Adenylosuccinate synthetase from Gloeobacter violaceus (strain ATCC 29082 / PCC 7421).